The primary structure comprises 246 residues: Small ribosomal subunit protein uS3 (246 aa).

One can recognise a KH type-2 domain in the interval 38–106 (IRQYLNARLA…DVQINIYEIR (69 aa)). Residues 218–246 (VAKNQSRRPNAQGGNNRGGDRNRRRKGNR) are disordered.

The protein belongs to the universal ribosomal protein uS3 family. In terms of assembly, part of the 30S ribosomal subunit. Forms a tight complex with proteins S10 and S14.

In terms of biological role, binds the lower part of the 30S subunit head. Binds mRNA in the 70S ribosome, positioning it for translation. The chain is Small ribosomal subunit protein uS3 from Porphyromonas gingivalis (strain ATCC 33277 / DSM 20709 / CIP 103683 / JCM 12257 / NCTC 11834 / 2561).